A 357-amino-acid chain; its full sequence is Phosphoribosylformylglycinamidine cyclo-ligase (357 aa).

The protein belongs to the AIR synthase family.

The protein localises to the cytoplasm. It carries out the reaction 2-formamido-N(1)-(5-O-phospho-beta-D-ribosyl)acetamidine + ATP = 5-amino-1-(5-phospho-beta-D-ribosyl)imidazole + ADP + phosphate + H(+). The protein operates within purine metabolism; IMP biosynthesis via de novo pathway; 5-amino-1-(5-phospho-D-ribosyl)imidazole from N(2)-formyl-N(1)-(5-phospho-D-ribosyl)glycinamide: step 2/2. The protein is Phosphoribosylformylglycinamidine cyclo-ligase of Rhizobium leguminosarum.